We begin with the raw amino-acid sequence, 182 residues long: Probable RNA 2'-phosphotransferase (182 aa).

Belongs to the KptA/TPT1 family.

Removes the 2'-phosphate from RNA via an intermediate in which the phosphate is ADP-ribosylated by NAD followed by a presumed transesterification to release the RNA and generate ADP-ribose 1''-2''-cyclic phosphate (APPR&gt;P). May function as an ADP-ribosylase. The chain is Probable RNA 2'-phosphotransferase from Pseudomonas paraeruginosa (strain DSM 24068 / PA7) (Pseudomonas aeruginosa (strain PA7)).